The chain runs to 402 residues: Type II NADH:quinone oxidoreductase (402 aa).

FAD contacts are provided by residues Gly-12 to Ala-16, Asn-39 to Lys-40, and Val-83. Glu-172 is an active-site residue. FAD is bound by residues Asp-302, Ala-319–Gln-320, and Lys-379.

This sequence belongs to the NADH dehydrogenase family. It depends on FAD as a cofactor.

It is found in the cell membrane. The catalysed reaction is a quinone + NADH + H(+) = a quinol + NAD(+). In terms of biological role, alternative, nonproton pumping NADH:quinone oxidoreductase that delivers electrons to the respiratory chain by oxidation of NADH and reduction of quinones, and contributes to the regeneration of NAD(+). This is Type II NADH:quinone oxidoreductase from Staphylococcus epidermidis (strain ATCC 12228 / FDA PCI 1200).